The sequence spans 592 residues: Imidazole glycerol phosphate synthase hisHF, chloroplastic (592 aa).

The transit peptide at 1-55 (MEATAAPFSSIVSSRQNFSSSSSIRASSPASLFLSQKSIGNVNRKFKSPRSLSVR) directs the protein to the chloroplast. The Glutamine amidotransferase type-1 domain maps to 63–271 (VVTLLDYGAG…LHPKLPATQK (209 aa)). Catalysis depends on for GATase activity residues cysteine 141, histidine 246, and glutamate 248. The tract at residues 280–592 (LAKRVIACLD…LQEERIEVRI (313 aa)) is cyclase. Active-site residues include aspartate 289 and aspartate 447.

This sequence in the C-terminal section; belongs to the HisA/HisF family.

It is found in the plastid. Its subcellular location is the chloroplast. The enzyme catalyses 5-[(5-phospho-1-deoxy-D-ribulos-1-ylimino)methylamino]-1-(5-phospho-beta-D-ribosyl)imidazole-4-carboxamide + L-glutamine = D-erythro-1-(imidazol-4-yl)glycerol 3-phosphate + 5-amino-1-(5-phospho-beta-D-ribosyl)imidazole-4-carboxamide + L-glutamate + H(+). It catalyses the reaction L-glutamine + H2O = L-glutamate + NH4(+). Its pathway is amino-acid biosynthesis; L-histidine biosynthesis; L-histidine from 5-phospho-alpha-D-ribose 1-diphosphate: step 5/9. In terms of biological role, IGPS catalyzes the conversion of PRFAR and glutamine to IGP, AICAR and glutamate. The glutaminase domain produces the ammonia necessary for the cyclase domain to produce IGP and AICAR from PRFAR. The ammonia is channeled to the active site of the cyclase domain. The protein is Imidazole glycerol phosphate synthase hisHF, chloroplastic (HISN4) of Arabidopsis thaliana (Mouse-ear cress).